Consider the following 289-residue polypeptide: 4-diphosphocytidyl-2-C-methyl-D-erythritol kinase (289 aa).

Residue Lys-10 is part of the active site. 94–104 (PVAAGLAGGSS) contributes to the ATP binding site. Asp-136 is a catalytic residue.

This sequence belongs to the GHMP kinase family. IspE subfamily.

The enzyme catalyses 4-CDP-2-C-methyl-D-erythritol + ATP = 4-CDP-2-C-methyl-D-erythritol 2-phosphate + ADP + H(+). It participates in isoprenoid biosynthesis; isopentenyl diphosphate biosynthesis via DXP pathway; isopentenyl diphosphate from 1-deoxy-D-xylulose 5-phosphate: step 3/6. Its function is as follows. Catalyzes the phosphorylation of the position 2 hydroxy group of 4-diphosphocytidyl-2C-methyl-D-erythritol. This is 4-diphosphocytidyl-2-C-methyl-D-erythritol kinase from Bacillus cytotoxicus (strain DSM 22905 / CIP 110041 / 391-98 / NVH 391-98).